We begin with the raw amino-acid sequence, 273 residues long: Dermonecrotic toxin LdSicTox-alphaIB3aiv (273 aa).

H5 is a catalytic residue. Mg(2+)-binding residues include E25 and D27. The active-site Nucleophile is H41. 2 cysteine pairs are disulfide-bonded: C45-C51 and C47-C190. D85 contributes to the Mg(2+) binding site.

Belongs to the arthropod phospholipase D family. Class II subfamily. The cofactor is Mg(2+). As to expression, expressed by the venom gland.

The protein localises to the secreted. The catalysed reaction is an N-(acyl)-sphingosylphosphocholine = an N-(acyl)-sphingosyl-1,3-cyclic phosphate + choline. It carries out the reaction an N-(acyl)-sphingosylphosphoethanolamine = an N-(acyl)-sphingosyl-1,3-cyclic phosphate + ethanolamine. It catalyses the reaction a 1-acyl-sn-glycero-3-phosphocholine = a 1-acyl-sn-glycero-2,3-cyclic phosphate + choline. The enzyme catalyses a 1-acyl-sn-glycero-3-phosphoethanolamine = a 1-acyl-sn-glycero-2,3-cyclic phosphate + ethanolamine. Functionally, dermonecrotic toxins cleave the phosphodiester linkage between the phosphate and headgroup of certain phospholipids (sphingolipid and lysolipid substrates), forming an alcohol (often choline) and a cyclic phosphate. This toxin acts on sphingomyelin (SM). It may also act on ceramide phosphoethanolamine (CPE), lysophosphatidylcholine (LPC) and lysophosphatidylethanolamine (LPE), but not on lysophosphatidylserine (LPS), and lysophosphatidylglycerol (LPG). It acts by transphosphatidylation, releasing exclusively cyclic phosphate products as second products. Induces dermonecrosis, hemolysis, increased vascular permeability, edema, inflammatory response, and platelet aggregation. The chain is Dermonecrotic toxin LdSicTox-alphaIB3aiv from Loxosceles deserta (Desert recluse spider).